The primary structure comprises 378 residues: C-C chemokine receptor type 7 (378 aa).

An N-terminal signal peptide occupies residues 1–24; that stretch reads MDPGKPRKNVLVVALLVIFQVCFC. Residues 25 to 59 are Extracellular-facing; the sequence is QDEVTDDYIGENTTVDYTLYESVCFKKDVRNFKAW. Asn36 carries N-linked (GlcNAc...) asparagine glycosylation. Residues 60-86 form a helical membrane-spanning segment; the sequence is FLPLMYSVICFVGLLGNGLVILTYIYF. Residues 87 to 95 lie on the Cytoplasmic side of the membrane; the sequence is KRLKTMTDT. The chain crosses the membrane as a helical span at residues 96 to 116; the sequence is YLLNLAVADILFLLILPFWAY. Residues 117–130 are Extracellular-facing; that stretch reads SEAKSWIFGVYLCK. Cys129 and Cys210 are joined by a disulfide. Residues 131-152 form a helical membrane-spanning segment; the sequence is GIFGIYKLSFFSGMLLLLCISI. Residues 153-170 are Cytoplasmic-facing; sequence DRYVAIVQAVSAHRHRAR. Residues 171–191 traverse the membrane as a helical segment; the sequence is VLLISKLSCVGIWMLALFLSI. Residues 192 to 219 are Extracellular-facing; it reads PELLYSGLQKNSGEDTLRCSLVSAQVEA. The chain crosses the membrane as a helical span at residues 220–247; sequence LITIQVAQMVFGFLVPMLAMSFCYLIII. At 248–263 the chain is on the cytoplasmic side; the sequence is RTLLQARNFERNKAIK. A helical membrane pass occupies residues 264-289; it reads VIIAVVVVFIVFQLPYNGVVLAQTVA. At 290 to 313 the chain is on the extracellular side; it reads NFNITNSSCETSKQLNIAYDVTYS. A helical transmembrane segment spans residues 314–331; the sequence is LASVRCCVNPFLYAFIGV. The Cytoplasmic portion of the chain corresponds to 332–378; it reads KFRSDLFKLFKDLGCLSQERLRHWSSCRHVRNASVSMEAETTTTFSP.

Belongs to the G-protein coupled receptor 1 family.

The protein localises to the cell membrane. In terms of biological role, receptor for the MIP-3-beta chemokine. The polypeptide is C-C chemokine receptor type 7 (Ccr7) (Mus musculus (Mouse)).